The sequence spans 160 residues: RNA-binding protein 3 (160 aa).

Positions 6–84 (GKLFVGGLNF…RQIRVDHAGK (79 aa)) constitute an RRM domain. Residue arginine 47 is modified to Omega-N-methylarginine. Residues 81 to 116 (HAGKSARGSRGGAFGSYERGRGYPRGGGDQGYGSGR) form a disordered region. The span at 103-114 (YPRGGGDQGYGS) shows a compositional bias: gly residues. The residue at position 105 (arginine 105) is an Asymmetric dimethylarginine; alternate. Arginine 105 is subject to Dimethylated arginine; alternate. Arginine 105 carries the post-translational modification Omega-N-methylarginine; alternate. Residues arginine 120 and arginine 134 each carry the omega-N-methylarginine modification. The tract at residues 135–160 (SRDYGGRSQGGYDRYSGGNYRDNYDN) is disordered. Serine 150 carries the post-translational modification Phosphoserine. Position 158 is a phosphotyrosine (tyrosine 158).

As to quaternary structure, interacts with RPL4. Associates with the 60S ribosomal subunits.

It is found in the nucleus. It localises to the cytoplasm. Its subcellular location is the cell projection. The protein localises to the dendrite. In terms of biological role, cold-inducible mRNA binding protein that enhances global protein synthesis at both physiological and mild hypothermic temperatures. Reduces the relative abundance of microRNAs, when overexpressed. Enhances phosphorylation of translation initiation factors and active polysome formation. The polypeptide is RNA-binding protein 3 (Capra hircus (Goat)).